A 78-amino-acid polypeptide reads, in one-letter code: Translational regulator CsrA (78 aa).

It belongs to the CsrA/RsmA family. As to quaternary structure, homodimer; the beta-strands of each monomer intercalate to form a hydrophobic core, while the alpha-helices form wings that extend away from the core.

Its subcellular location is the cytoplasm. A translational regulator that binds mRNA to regulate translation initiation and/or mRNA stability. Usually binds in the 5'-UTR at or near the Shine-Dalgarno sequence preventing ribosome-binding, thus repressing translation. Its main target seems to be the major flagellin gene, while its function is anatagonized by FliW. This is Translational regulator CsrA from Borrelia hermsii (strain HS1 / DAH).